A 447-amino-acid polypeptide reads, in one-letter code: UDP-N-acetylmuramate--L-alanine ligase (447 aa).

Residue 115-121 (GAHGKTS) participates in ATP binding.

This sequence belongs to the MurCDEF family.

Its subcellular location is the cytoplasm. It catalyses the reaction UDP-N-acetyl-alpha-D-muramate + L-alanine + ATP = UDP-N-acetyl-alpha-D-muramoyl-L-alanine + ADP + phosphate + H(+). Its pathway is cell wall biogenesis; peptidoglycan biosynthesis. Cell wall formation. The sequence is that of UDP-N-acetylmuramate--L-alanine ligase from Streptococcus thermophilus (strain CNRZ 1066).